Consider the following 710-residue polypeptide: Dihydroxyacetone synthase (710 aa).

Thiamine diphosphate contacts are provided by residues His-78 and 128 to 130 (GPL). Mg(2+)-binding residues include Asp-169, Asn-199, and Val-201. Asn-199 serves as a coordination point for thiamine diphosphate. His-275, Glu-433, and Phe-461 together coordinate thiamine diphosphate. Glu-433 acts as the Proton donor in catalysis. Residues 708-710 (NKL) carry the Microbody targeting signal motif.

Belongs to the transketolase family. Mg(2+) is required as a cofactor. It depends on Ca(2+) as a cofactor. The cofactor is Mn(2+). Co(2+) serves as cofactor. Requires thiamine diphosphate as cofactor.

The protein resides in the peroxisome. It carries out the reaction D-xylulose 5-phosphate + formaldehyde = dihydroxyacetone + D-glyceraldehyde 3-phosphate. In terms of biological role, this is the major methanol assimilatory enzyme from the methylotrophic Hansenula polymorpha. The sequence is that of Dihydroxyacetone synthase (DAS) from Pichia angusta (Yeast).